Reading from the N-terminus, the 676-residue chain is Urocanate hydratase (676 aa).

Residues 126 to 127, glutamine 204, 251 to 253, glutamate 271, 317 to 318, 343 to 347, 354 to 355, and tyrosine 403 contribute to the NAD(+) site; these read GG, GMS, NV, QTSCH, and YY. N6-succinyllysine is present on lysine 534. An NAD(+)-binding site is contributed by glycine 594.

It belongs to the urocanase family. Requires NAD(+) as cofactor.

The enzyme catalyses 4-imidazolone-5-propanoate = trans-urocanate + H2O. It functions in the pathway amino-acid degradation; L-histidine degradation into L-glutamate; N-formimidoyl-L-glutamate from L-histidine: step 2/3. This is Urocanate hydratase (Uroc1) from Mus musculus (Mouse).